The chain runs to 78 residues: D-alanyl carrier protein (78 aa).

The Carrier domain occupies 1–78; the sequence is MEFREQVLNL…KIVEALEELR (78 aa). Position 36 is an O-(pantetheine 4'-phosphoryl)serine (serine 36).

It belongs to the DltC family. In terms of processing, 4'-phosphopantetheine is transferred from CoA to a specific serine of apo-DCP.

It is found in the cytoplasm. It functions in the pathway cell wall biogenesis; lipoteichoic acid biosynthesis. Functionally, carrier protein involved in the D-alanylation of lipoteichoic acid (LTA). The loading of thioester-linked D-alanine onto DltC is catalyzed by D-alanine--D-alanyl carrier protein ligase DltA. The DltC-carried D-alanyl group is further transferred to cell membrane phosphatidylglycerol (PG) by forming an ester bond, probably catalyzed by DltD. D-alanylation of LTA plays an important role in modulating the properties of the cell wall in Gram-positive bacteria, influencing the net charge of the cell wall. This is D-alanyl carrier protein from Staphylococcus aureus (strain Mu50 / ATCC 700699).